We begin with the raw amino-acid sequence, 242 residues long: Small ribosomal subunit protein uS2 (242 aa).

This sequence belongs to the universal ribosomal protein uS2 family.

The chain is Small ribosomal subunit protein uS2 from Aeromonas salmonicida (strain A449).